The sequence spans 503 residues: Probable cytosol aminopeptidase (503 aa).

Positions 270 and 275 each coordinate Mn(2+). The active site involves lysine 282. The Mn(2+) site is built by aspartate 293, aspartate 352, and glutamate 354. Arginine 356 is a catalytic residue.

Belongs to the peptidase M17 family. It depends on Mn(2+) as a cofactor.

Its subcellular location is the cytoplasm. The catalysed reaction is Release of an N-terminal amino acid, Xaa-|-Yaa-, in which Xaa is preferably Leu, but may be other amino acids including Pro although not Arg or Lys, and Yaa may be Pro. Amino acid amides and methyl esters are also readily hydrolyzed, but rates on arylamides are exceedingly low.. It carries out the reaction Release of an N-terminal amino acid, preferentially leucine, but not glutamic or aspartic acids.. Its function is as follows. Presumably involved in the processing and regular turnover of intracellular proteins. Catalyzes the removal of unsubstituted N-terminal amino acids from various peptides. This Klebsiella pneumoniae (strain 342) protein is Probable cytosol aminopeptidase.